Consider the following 342-residue polypeptide: S-adenosylmethionine:tRNA ribosyltransferase-isomerase (342 aa).

The protein belongs to the QueA family. In terms of assembly, monomer.

It is found in the cytoplasm. It carries out the reaction 7-aminomethyl-7-carbaguanosine(34) in tRNA + S-adenosyl-L-methionine = epoxyqueuosine(34) in tRNA + adenine + L-methionine + 2 H(+). It participates in tRNA modification; tRNA-queuosine biosynthesis. Its function is as follows. Transfers and isomerizes the ribose moiety from AdoMet to the 7-aminomethyl group of 7-deazaguanine (preQ1-tRNA) to give epoxyqueuosine (oQ-tRNA). This Streptococcus pneumoniae (strain Hungary19A-6) protein is S-adenosylmethionine:tRNA ribosyltransferase-isomerase.